Here is a 918-residue protein sequence, read N- to C-terminus: MDYKNTLNLPKTSFPMRANLVNKEKAFLKEWEEMDLYNYVLEQRKGKPLFVLHDGPPYANGHIHIGTALNKILKDIVVKYKTMRGYRAPYVPGWDTHGLPIEHRVSQELGDRIKEMSPAEIRKKCEEFALKFVEIQKEEFKRLGVRGDWNNPYITLKPDYEVKILDVFKTLVEQGNVYRSLKPIYWCPRCRTALAEAEIEYHDHRSPSIYVKFRSKDDPNLYIVIWTTTPWTLPANVGIALHPDFEYSVVKVGDERWVIATDLLETFSRETGVDCSEVVEKIRGKDLEGKEFQHPIFEDKTSRVILADYVSLETGTGCVHIAPGHGEEDYVYGHVKYGLPIVSPVDEEGRFTDEAGKYRGMFIEDSNRVIIEDLKEKGILVHASTITHSYPHCWRCKGPVIFRATEQWFISVDHNNLRQRVLEEIDRVKWIPEWGRNRIRSMVEERPDWCISRQRVWGTPIPAVKCKECGEVTLDPKVIEHFMKIVEKEGTNAWFEKDVEELIPDDFRCPKCGARSFEKMLDTLDVWIDSGSSFEYITTREDHPFPLDMYLEGSDQHRGWFHSSIFLAVAKRGSAPYKEVLTHGFIKDELGRKMSKSLGNVVDPMEVVEKYGAEILRLWLASSDYFNDIKISMRIVEQQTEVYKKIRNTFRFLLGNLEDFDPELDRVPYEKLLTIDKWALGRLQEIIKRATEYYDSYEFSKVYNLVVKYCTTELSSLYLDVVKDRLYVEAKDSLYRRSAQTVMHEILIALMKILAPIMTFTMEEVYSHLHEKDRKYKTVQAEYWPEYREDLIDKKIMEDFEKLLSIREDVLKALEEKRQQDVIGHSLDAEVILVPRNDSVKALLEEYRDVLEELFIVSKVSLSDGSGELKGELVEVTAKHAEGEKCQRCWKYTTEISRSEEFPAVCPRCLAVLKGERK.

The 'HIGH' region motif lies at 57 to 67; the sequence is PYANGHIHIGT. L-isoleucyl-5'-AMP is bound at residue Glu-552. The 'KMSKS' region signature appears at 593-597; the sequence is KMSKS. Lys-596 contributes to the ATP binding site. Cys-886, Cys-889, Cys-906, and Cys-909 together coordinate Zn(2+).

Belongs to the class-I aminoacyl-tRNA synthetase family. IleS type 1 subfamily. Monomer. Requires Zn(2+) as cofactor.

It is found in the cytoplasm. The enzyme catalyses tRNA(Ile) + L-isoleucine + ATP = L-isoleucyl-tRNA(Ile) + AMP + diphosphate. Its function is as follows. Catalyzes the attachment of isoleucine to tRNA(Ile). As IleRS can inadvertently accommodate and process structurally similar amino acids such as valine, to avoid such errors it has two additional distinct tRNA(Ile)-dependent editing activities. One activity is designated as 'pretransfer' editing and involves the hydrolysis of activated Val-AMP. The other activity is designated 'posttransfer' editing and involves deacylation of mischarged Val-tRNA(Ile). In Thermotoga neapolitana (strain ATCC 49049 / DSM 4359 / NBRC 107923 / NS-E), this protein is Isoleucine--tRNA ligase.